A 30-amino-acid chain; its full sequence is APWLVPSQITTCCGYNPGTMCPSCMCTNTC.

P2 carries the 4-hydroxyproline modification. Residue S7 is glycosylated (O-linked (HexNAc...) serine). 3 cysteine pairs are disulfide-bonded: C12–C21, C13–C26, and C24–C30. 4-hydroxyproline occurs at positions 17 and 22.

O-glycosylated at Ser-7 by a core type 9 glycan, containing both D- and L-galactose units (alpha-L-Galp-(1-&gt;4)-alpha-D- GlcpNAc-(1-&gt;6)-[alpha-L-Galp-(1-&gt;2)-bets-D-Galp-(1-&gt;3)-]alpha-D-GalpNAc-(1-&gt;O)). As to expression, expressed by the venom duct.

It localises to the secreted. Its function is as follows. May specifically activate neuronal voltage-gated sodium channels (Nav) at the resting membrane potential. Causes a marked contraction and extension of the caudal and dorsal fins in fish and noticeable spontaneous contractions of isolated frog neuromuscular preparations. The chain is Conotoxin CcTx from Conus consors (Singed cone).